Consider the following 409-residue polypeptide: Aspartate aminotransferase, cytoplasmic (409 aa).

Position 2 is an N-acetylserine (serine 2). Glycine 38, tryptophan 138, and asparagine 191 together coordinate L-aspartate. Lysine 255 carries the post-translational modification N6-(pyridoxal phosphate)lysine. Arginine 383 serves as a coordination point for L-aspartate. Serine 385 bears the Phosphoserine mark.

It belongs to the class-I pyridoxal-phosphate-dependent aminotransferase family. Homodimer. It depends on pyridoxal 5'-phosphate as a cofactor.

Its subcellular location is the cytoplasm. It catalyses the reaction L-aspartate + 2-oxoglutarate = oxaloacetate + L-glutamate. Plays a key role in amino acid metabolism. In Schizosaccharomyces pombe (strain 972 / ATCC 24843) (Fission yeast), this protein is Aspartate aminotransferase, cytoplasmic.